Consider the following 321-residue polypeptide: Protein BIG GRAIN 1-like E (321 aa).

Residues 134–217 form a disordered region; sequence AGSKKNKSKS…PPPYLNTPTK (84 aa). Positions 135 to 147 are enriched in basic residues; the sequence is GSKKNKSKSKSKT. A compositionally biased stretch (low complexity) spans 172 to 206; it reads ISHFFSSSRSTSTTTTTTASSSSKSLISSSSSGFR.

The protein belongs to the BIG GRAIN 1 (BG1) plant protein family.

The protein resides in the cell membrane. In terms of biological role, involved in auxin transport. Regulator of the auxin signaling pathway. This chain is Protein BIG GRAIN 1-like E, found in Arabidopsis thaliana (Mouse-ear cress).